The following is a 449-amino-acid chain: Tubulin beta-4 chain (449 aa).

An MREI motif motif is present at residues 1–4 (MREI). 8 residues coordinate GTP: Q11, E69, S138, G142, T143, G144, N204, and N226. A Mg(2+)-binding site is contributed by E69. The segment at 421-449 (EYQQYQDATAEEEGEMYEDDEEESEQGAK) is disordered. Over residues 429–449 (TAEEEGEMYEDDEEESEQGAK) the composition is skewed to acidic residues. A 5-glutamyl polyglutamate modification is found at E438. A Phosphoserine modification is found at S444.

This sequence belongs to the tubulin family. Dimer of alpha and beta chains. A typical microtubule is a hollow water-filled tube with an outer diameter of 25 nm and an inner diameter of 15 nM. Alpha-beta heterodimers associate head-to-tail to form protofilaments running lengthwise along the microtubule wall with the beta-tubulin subunit facing the microtubule plus end conferring a structural polarity. Microtubules usually have 13 protofilaments but different protofilament numbers can be found in some organisms and specialized cells. Mg(2+) is required as a cofactor. Some glutamate residues at the C-terminus are polyglycylated, resulting in polyglycine chains on the gamma-carboxyl group. Glycylation is mainly limited to tubulin incorporated into axonemes (cilia and flagella) whereas glutamylation is prevalent in neuronal cells, centrioles, axonemes, and the mitotic spindle. Both modifications can coexist on the same protein on adjacent residues, and lowering polyglycylation levels increases polyglutamylation, and reciprocally. The precise function of polyglycylation is still unclear. In terms of processing, some glutamate residues at the C-terminus are polyglutamylated, resulting in polyglutamate chains on the gamma-carboxyl group. Polyglutamylation plays a key role in microtubule severing by spastin (SPAST). SPAST preferentially recognizes and acts on microtubules decorated with short polyglutamate tails: severing activity by SPAST increases as the number of glutamates per tubulin rises from one to eight, but decreases beyond this glutamylation threshold. In terms of tissue distribution, neuron specific.

The protein resides in the cytoplasm. It is found in the cytoskeleton. Tubulin is the major constituent of microtubules, a cylinder consisting of laterally associated linear protofilaments composed of alpha- and beta-tubulin heterodimers. Microtubules grow by the addition of GTP-tubulin dimers to the microtubule end, where a stabilizing cap forms. Below the cap, tubulin dimers are in GDP-bound state, owing to GTPase activity of alpha-tubulin. This Gallus gallus (Chicken) protein is Tubulin beta-4 chain.